Consider the following 209-residue polypeptide: Guanylate kinase (209 aa).

A Guanylate kinase-like domain is found at 5–182 (GLLIVISGPS…AVTKINSIIV (178 aa)). An ATP-binding site is contributed by 12-19 (GPSGAGKG).

It belongs to the guanylate kinase family.

The protein resides in the cytoplasm. The enzyme catalyses GMP + ATP = GDP + ADP. Essential for recycling GMP and indirectly, cGMP. This chain is Guanylate kinase, found in Clostridium acetobutylicum (strain ATCC 824 / DSM 792 / JCM 1419 / IAM 19013 / LMG 5710 / NBRC 13948 / NRRL B-527 / VKM B-1787 / 2291 / W).